Here is an 879-residue protein sequence, read N- to C-terminus: Alanine--tRNA ligase (879 aa).

Residues H567, H571, C669, and H673 each contribute to the Zn(2+) site.

It belongs to the class-II aminoacyl-tRNA synthetase family. The cofactor is Zn(2+).

The protein resides in the cytoplasm. The catalysed reaction is tRNA(Ala) + L-alanine + ATP = L-alanyl-tRNA(Ala) + AMP + diphosphate. Catalyzes the attachment of alanine to tRNA(Ala) in a two-step reaction: alanine is first activated by ATP to form Ala-AMP and then transferred to the acceptor end of tRNA(Ala). Also edits incorrectly charged Ser-tRNA(Ala) and Gly-tRNA(Ala) via its editing domain. This Lactobacillus helveticus (strain DPC 4571) protein is Alanine--tRNA ligase.